The chain runs to 92 residues: Small ribosomal subunit protein uS19c (92 aa).

It belongs to the universal ribosomal protein uS19 family.

The protein localises to the plastid. The protein resides in the chloroplast. Its function is as follows. Protein S19 forms a complex with S13 that binds strongly to the 16S ribosomal RNA. This chain is Small ribosomal subunit protein uS19c, found in Manihot esculenta (Cassava).